The sequence spans 113 residues: MFSRVIFCTFLILPLLAAATAIPRTNPPAPTCTTGSLQCCNSVQAASNPVVGLLAGLLGIVLGPITGQVGLTCSPITVIGVGGTSCSAQTVCCNGNSFNGLIVVGCSPVNISL.

An N-terminal signal peptide occupies residues 1–21; it reads MFSRVIFCTFLILPLLAAATA. Disulfide bonds link cysteine 32-cysteine 92, cysteine 39-cysteine 86, cysteine 40-cysteine 73, and cysteine 93-cysteine 106. N-linked (GlcNAc...) asparagine glycosylation is present at asparagine 110.

Belongs to the fungal hydrophobin family. Self-assembles to form functional amyloid fibrils called rodlets. Self-assembly into fibrillar rodlets occurs spontaneously at hydrophobic:hydrophilic interfaces and the rodlets further associate laterally to form amphipathic monolayers. As to expression, expressionn is switched off in the fruiting bodies but abundantly expressed in the vegetative mycelium of both monokaryon and dikaryon.

It is found in the secreted. Its subcellular location is the cell wall. Functionally, aerial growth, conidiation, and dispersal of filamentous fungi in the environment rely upon a capability of their secreting small amphipathic proteins called hydrophobins (HPBs) with low sequence identity. Class I can self-assemble into an outermost layer of rodlet bundles on aerial cell surfaces, conferring cellular hydrophobicity that supports fungal growth, development and dispersal; whereas Class II form highly ordered films at water-air interfaces through intermolecular interactions but contribute nothing to the rodlet structure. POH3 is a class I hydrophobin that causes a large drop in the water-surface tension, enabling hyphae to breach the interface and grow into the air, in both the primary and the secondary mycelium. In the latter mycelium POH3 maight also play a role in the emergence of fruiting bodies. Secreted POH3 could also play a role in facilitating lignin degradation. In Pleurotus ostreatus (Oyster mushroom), this protein is Class I hydrophobin POH3.